Consider the following 885-residue polypeptide: Disease resistance protein RFL1 (885 aa).

The stretch at 27–61 forms a coiled coil; sequence SYIQNLSENLASLQKAMGVLNAKRDDVQGRINREE. The 303-residue stretch at 141–443 folds into the NB-ARC domain; the sequence is EAAPIAEVEE…CEGFIKEKQG (303 aa). 183–190 provides a ligand contact to ATP; sequence GMGGVGKT. LRR repeat units follow at residues 517-538, 539-561, 564-586, 588-610, 611-633, 634-655, and 657-679; these read AVKR…PECV, ELIT…FFRC, SLAV…ISEL, SLQY…HELR, KLVH…SYLS, SLRT…MKEL, and LLEH…LFCY.

Belongs to the disease resistance NB-LRR family.

Disease resistance (R) protein. In Arabidopsis thaliana (Mouse-ear cress), this protein is Disease resistance protein RFL1 (RFL1).